The following is a 23-amino-acid chain: Paralytic peptide 2 (23 aa).

Cys-7 and Cys-19 are oxidised to a cystine.

The protein belongs to the GBP/PSP1/paralytic peptide family. Hemolymph.

Functionally, causes rapid, rigid paralysis when injected into Lepidopteran larvae. The physiological role may be to reduce hemolymph loss following injury and promote wound healing. The sequence is that of Paralytic peptide 2 from Manduca sexta (Tobacco hawkmoth).